Consider the following 205-residue polypeptide: Protein Rcp (205 aa).

The protein belongs to the NAD(P)-dependent epimerase/dehydratase family.

The chain is Protein Rcp (rcp) from Vibrio cholerae serotype O1 (strain ATCC 39315 / El Tor Inaba N16961).